The sequence spans 372 residues: Alanine dehydrogenase 1 (372 aa).

Residue histidine 94 is part of the active site. Residue 170 to 200 participates in NAD(+) binding; it reads TYVIFGGGVAATNAANVALGLNAKVIIIELN.

Belongs to the AlaDH/PNT family.

The catalysed reaction is L-alanine + NAD(+) + H2O = pyruvate + NH4(+) + NADH + H(+). The protein operates within amino-acid degradation; L-alanine degradation via dehydrogenase pathway; NH(3) and pyruvate from L-alanine: step 1/1. Its function is as follows. May play a role in cell wall synthesis as L-alanine is an important constituent of the peptidoglycan layer. This is Alanine dehydrogenase 1 (ald1) from Staphylococcus aureus (strain MSSA476).